The following is a 61-amino-acid chain: Large ribosomal subunit protein uL30 (61 aa).

This sequence belongs to the universal ribosomal protein uL30 family. In terms of assembly, part of the 50S ribosomal subunit.

The sequence is that of Large ribosomal subunit protein uL30 from Latilactobacillus sakei subsp. sakei (strain 23K) (Lactobacillus sakei subsp. sakei).